Here is a 66-residue protein sequence, read N- to C-terminus: Beta-mammal toxin Css2 (66 aa).

One can recognise an LCN-type CS-alpha/beta domain in the interval 1-66 (KEGYLVSKST…VWPLPNKTCN (66 aa)). Cystine bridges form between Cys-12/Cys-65, Cys-16/Cys-41, Cys-25/Cys-46, and Cys-29/Cys-48. At Asn-66 the chain carries Asparagine amide.

The protein belongs to the long (4 C-C) scorpion toxin superfamily. Sodium channel inhibitor family. Beta subfamily. C-terminal amidation increases its affinity for sodium channels. In terms of tissue distribution, expressed by the venom gland.

It localises to the secreted. In terms of biological role, beta toxin that binds site-4 of sodium channels (Nav) and reduces peak current (observed on Nav1.6/SCN8A (IC(50)=307 nM)), shifts the voltage of activation toward more negative potentials (observed on Nav1.6, Nav1.1 (weak), Nav1.2 (weak), and Nav1.7 (weak)), and induces resurgent currents at negative voltages following brief and strong depolarizations (observed on Nav1.6, Nav1.1 (weak), and Nav1.7 (weak)). A reduction of peak current of Nav1.5/SCN7A has been observed in another study (IC(50)=35-40 nM). This toxin is only active on mammals. It has been shown to bind phospholipids. The protein is Beta-mammal toxin Css2 of Centruroides suffusus (Durango bark scorpion).